A 407-amino-acid chain; its full sequence is MLRIGLTGGIGAGKSLLSTTFSQCGGIVVDGDVLAREVVQPGTEGLASLVDAFGRDILLADGALDRQALAAKAFRDDESRGVLNGIVHPLVARRRSEIIAAVSGDAVVVEDIPLLVESGMAPLFPLVVVVHADVELRVRRLVEQRGMAEADARARIAAQASDQQRRAVADVWLDNSGSPEDLVRRARDVWNTRVQPFAHNLAQRQIARAPARLVPADPSWPDQARRIVNRLKIACGHKALRVDHIGSTAVSGFPDFLAKDVIDIQVTVESLDVADELAEPLLAAGYPRLEHITQDTEKTDARSTVGRYDHTDSAALWHKRVHASADPGRPTNVHLRVHGWPNQQFALLFVDWLAANPGAREDYLTVKCDADRRADGELARYVTAKEPWFLDAYQRAWEWADAVHWRP.

The DPCK domain maps to 3-204 (RIGLTGGIGA…QPFAHNLAQR (202 aa)). Position 11 to 16 (11 to 16 (GAGKSL)) interacts with ATP. Residues 196–407 (PFAHNLAQRQ…EWADAVHWRP (212 aa)) are UPF0157.

This sequence in the N-terminal section; belongs to the CoaE family. In the C-terminal section; belongs to the UPF0157 (GrpB) family.

The protein resides in the cytoplasm. The catalysed reaction is 3'-dephospho-CoA + ATP = ADP + CoA + H(+). It functions in the pathway cofactor biosynthesis; coenzyme A biosynthesis; CoA from (R)-pantothenate: step 5/5. Catalyzes the phosphorylation of the 3'-hydroxyl group of dephosphocoenzyme A to form coenzyme A. The chain is Dephospho-CoA kinase from Mycobacterium bovis (strain ATCC BAA-935 / AF2122/97).